The following is a 39-amino-acid chain: Natriuretic peptide CnNP-b (39 aa).

The propeptide occupies 1–8 (SGSKTATK). Cys12 and Cys28 are disulfide-bonded. Positions 20-39 (IGSTSGMGCGGVPKPTPGGS) are disordered.

This sequence belongs to the natriuretic peptide family. As to expression, expressed by the venom gland.

The protein resides in the secreted. In terms of biological role, snake venom natriuretic peptide that targets both NPR1 and NPR2. Exhibits hypotensive and vasodepressor activities. The protein is Natriuretic peptide CnNP-b of Cryptophis nigrescens (Eastern small-eyed snake).